A 189-amino-acid polypeptide reads, in one-letter code: Calcyphosin (189 aa).

4 consecutive EF-hand domains span residues 21–56, 57–92, 93–128, and 136–172; these read SGIQ…LGLV, LDTA…PMSQ, AREA…RTHP, and TEEQ…VSAS. Ca(2+)-binding residues include Asp34, Asp36, Ser38, Ser40, Glu45, Asp70, Asp72, Ser74, Thr76, Glu81, Asp106, Ser108, Asp110, and Asp117. Residue Ser40 is modified to Phosphoserine; by PKA.

Monomer. Does not form oligomers in the presence of calcium.

It localises to the cytoplasm. Functionally, calcium-binding protein. May play a role in cellular signaling events (Potential). In Bos taurus (Bovine), this protein is Calcyphosin (CAPS).